Consider the following 334-residue polypeptide: Biotin synthase (334 aa).

Positions 55 to 280 (EEIEVEGIIS…HTMLRFAGGR (226 aa)) constitute a Radical SAM core domain. The [4Fe-4S] cluster site is built by Cys-70, Cys-74, and Cys-77. Residues Cys-113, Cys-205, and Arg-275 each contribute to the [2Fe-2S] cluster site.

The protein belongs to the radical SAM superfamily. Biotin synthase family. Homodimer. [4Fe-4S] cluster is required as a cofactor. Requires [2Fe-2S] cluster as cofactor.

The enzyme catalyses (4R,5S)-dethiobiotin + (sulfur carrier)-SH + 2 reduced [2Fe-2S]-[ferredoxin] + 2 S-adenosyl-L-methionine = (sulfur carrier)-H + biotin + 2 5'-deoxyadenosine + 2 L-methionine + 2 oxidized [2Fe-2S]-[ferredoxin]. The protein operates within cofactor biosynthesis; biotin biosynthesis; biotin from 7,8-diaminononanoate: step 2/2. In terms of biological role, catalyzes the conversion of dethiobiotin (DTB) to biotin by the insertion of a sulfur atom into dethiobiotin via a radical-based mechanism. This chain is Biotin synthase, found in Corynebacterium glutamicum (strain R).